The following is a 397-amino-acid chain: MAKSKFKTTFSNDKATTSSTALLKYINKKAPKGYKYEILYKGSDIYSLKKDNTDEKISFLVRFKFPLNFEGIKVTNPQDLLELSYRTQKEIVLDETLQNGSDGQPPTLVSLKGEVGKQSIFPIPFPKLDPIKLEWFGGALEIPIKRIPYASLSEIKLESESDNILHVSFLFNETNNKVHLNTNINFEYLRTIDDYFKFRDFLKNYSEGRVKILSKNITLRSEDNNDKIKIFEKNDKLYNALRLIQSKIDTKIPFPQNLSIKDVNIIKILFESYINDRVVKFKSEPSLKFTFDDSSNFKESFPITGKKNMGIFVPFQRNIKFLSVSIPIIENQLYTDTTVKTADLQDRVLILETNKNNESFVFYQNSEEYKEISINEMLEKKKAAIELDDIDFSVLKK.

In terms of biological role, confers resistance to phages by a mechanism of abortive infection. Seems to act by interfering with phage RNA synthesis. Does not act at the level of phage DNA synthesis. This chain is Abortive phage resistance protein AbiGii (abiGII), found in Lactococcus lactis subsp. cremoris (Streptococcus cremoris).